The chain runs to 314 residues: Putative integrase/recombinase y4rB (314 aa).

The 78-residue stretch at 2–79 folds into the Core-binding (CB) domain; the sequence is STFRQAVQEY…YVRVFARYRA (78 aa). One can recognise a Tyr recombinase domain in the interval 100–304; that stretch reads ARPYLYSKED…SPELMKEAMR (205 aa). Residues arginine 147, lysine 172, histidine 248, arginine 251, and histidine 282 contribute to the active site. The O-(3'-phospho-DNA)-tyrosine intermediate role is filled by tyrosine 291.

Belongs to the 'phage' integrase family.

The protein is Putative integrase/recombinase y4rB of Sinorhizobium fredii (strain NBRC 101917 / NGR234).